We begin with the raw amino-acid sequence, 194 residues long: Mu-like prophage FluMu protein gp37 (194 aa).

The protein to phage Mu protein gp37.

The sequence is that of Mu-like prophage FluMu protein gp37 from Haemophilus influenzae (strain ATCC 51907 / DSM 11121 / KW20 / Rd).